Reading from the N-terminus, the 244-residue chain is INO80 complex subunit E (244 aa).

Residues 10-54 (DYKKKYRNLKRKLKFLIYEHECFQEELRKAQRKLLKVSRDKSFLL) adopt a coiled-coil conformation. Disordered regions lie at residues 59 to 187 (QYEN…PLTF) and 222 to 244 (FSDA…DIPE). Composition is skewed to low complexity over residues 99–115 (PPLG…LPPS) and 122–136 (ASRA…LASP). Residues 157–171 (RPKREKRPRLPRKLK) show a composition bias toward basic residues. Glycyl lysine isopeptide (Lys-Gly) (interchain with G-Cter in SUMO2) cross-links involve residues lysine 159 and lysine 171. Acidic residues predominate over residues 230–244 (DALDGDDDLVIDIPE).

In terms of assembly, component of the chromatin remodeling INO80 complex; specifically part of a complex module associated with the N-terminus of INO80.

The protein localises to the nucleus. Functionally, putative regulatory component of the chromatin remodeling INO80 complex which is involved in transcriptional regulation, DNA replication and probably DNA repair. The protein is INO80 complex subunit E (INO80E) of Bos taurus (Bovine).